The primary structure comprises 225 residues: Uracil-DNA glycosylase (225 aa).

Catalysis depends on aspartate 68, which acts as the Proton acceptor.

The protein belongs to the uracil-DNA glycosylase (UDG) superfamily. UNG family.

The protein resides in the cytoplasm. The catalysed reaction is Hydrolyzes single-stranded DNA or mismatched double-stranded DNA and polynucleotides, releasing free uracil.. In terms of biological role, excises uracil residues from the DNA which can arise as a result of misincorporation of dUMP residues by DNA polymerase or due to deamination of cytosine. The sequence is that of Uracil-DNA glycosylase from Mycolicibacterium gilvum (strain PYR-GCK) (Mycobacterium gilvum (strain PYR-GCK)).